The primary structure comprises 474 residues: Ubiquinol-cytochrome-c reductase complex core protein 2, mitochondrial (474 aa).

The N-terminal 42 residues, 1-42, are a transit peptide targeting the mitochondrion; sequence MKSVVRSKGTQALFRRFSSALGDSINPNQVGVGDNVIRVNGR.

Belongs to the peptidase M16 family. UQCRC2/QCR2 subfamily. In terms of assembly, component of the ubiquinol-cytochrome c oxidoreductase (cytochrome b-c1 complex, complex III, CIII), a multisubunit enzyme composed of 3 respiratory subunits cytochrome b, cytochrome c1 and Rieske protein, 2 core protein subunits, and additional low-molecular weight protein subunits. The complex exists as an obligatory dimer and forms supercomplexes (SCs) in the inner mitochondrial membrane with cytochrome c oxidase (complex IV, CIV).

Its subcellular location is the mitochondrion inner membrane. In terms of biological role, component of the ubiquinol-cytochrome c oxidoreductase, a multisubunit transmembrane complex that is part of the mitochondrial electron transport chain which drives oxidative phosphorylation. The respiratory chain contains 3 multisubunit complexes succinate dehydrogenase (complex II, CII), ubiquinol-cytochrome c oxidoreductase (cytochrome b-c1 complex, complex III, CIII) and cytochrome c oxidase (complex IV, CIV), that cooperate to transfer electrons derived from NADH and succinate to molecular oxygen, creating an electrochemical gradient over the inner membrane that drives transmembrane transport and the ATP synthase. The cytochrome b-c1 complex catalyzes electron transfer from ubiquinol to cytochrome c, linking this redox reaction to translocation of protons across the mitochondrial inner membrane, with protons being carried across the membrane as hydrogens on the quinol. In the process called Q cycle, 2 protons are consumed from the matrix, 4 protons are released into the intermembrane space and 2 electrons are passed to cytochrome c. The protein is Ubiquinol-cytochrome-c reductase complex core protein 2, mitochondrial of Euglena gracilis.